The following is a 151-amino-acid chain: Ribosome maturation factor RimP (151 aa).

The protein belongs to the RimP family.

It is found in the cytoplasm. Functionally, required for maturation of 30S ribosomal subunits. In Vibrio atlanticus (strain LGP32) (Vibrio splendidus (strain Mel32)), this protein is Ribosome maturation factor RimP.